The sequence spans 293 residues: MAALASVPDTLAPGSPAKVGILDLAFAVRGGRTELVERYQKTPLQIMRPLWIDPEQPGMSYVYIMATGAGVAQADRYRMDFRCGPDTQVHLTTQAATKIFRMEHDYASQRVHLSAEAGSYVEYLPDPLIPFKGSRFYQRTEVTVAPGATVVVADTLTAGRLARGERHAYRVLATDLHISRPDGTLLAIDTLRLVPGRRGGGVLGPAVFAGHDLVASLFAVTDRVPATVLADALHDALAGLGLLHGVSVLPRDCGAWVRVLDDSPIRIAGAQEAVRQAVRRLLTGRPAPDLRKP.

The protein belongs to the UreD family. UreD, UreF and UreG form a complex that acts as a GTP-hydrolysis-dependent molecular chaperone, activating the urease apoprotein by helping to assemble the nickel containing metallocenter of UreC. The UreE protein probably delivers the nickel.

It localises to the cytoplasm. In terms of biological role, required for maturation of urease via the functional incorporation of the urease nickel metallocenter. The chain is Urease accessory protein UreD 2 from Streptomyces griseus subsp. griseus (strain JCM 4626 / CBS 651.72 / NBRC 13350 / KCC S-0626 / ISP 5235).